The sequence spans 185 residues: Ribosome-recycling factor (185 aa).

The protein belongs to the RRF family.

Its subcellular location is the cytoplasm. In terms of biological role, responsible for the release of ribosomes from messenger RNA at the termination of protein biosynthesis. May increase the efficiency of translation by recycling ribosomes from one round of translation to another. This is Ribosome-recycling factor from Pseudomonas aeruginosa (strain LESB58).